A 229-amino-acid polypeptide reads, in one-letter code: Histone H3-like centromeric protein CSE4 (229 aa).

Residues 1-35 (MSSKQQWVSSAIQSDSSGRSLSNVNRLAGDQQSIN) are compositionally biased toward polar residues. The segment at 1–78 (MSSKQQWVSS…DIETDYEDQA (78 aa)) is disordered. The segment covering 53-68 (PRREERRRYESSKSDL) has biased composition (basic and acidic residues). The Nuclear localization signal signature appears at 115–132 (KRREKQRKQSLKRVEKKY). The H3-like stretch occupies residues 132 to 229 (YTPSELALYE…LARRIRGQFI (98 aa)).

Belongs to the histone H3 family. In terms of assembly, component of centromeric nucleosomes, where DNA is wrapped around a histone octamer core. The octamer contains two molecules each of H2A, H2B, CSE4/CENPA and H4 assembled in one CSE4-H4 heterotetramer and two H2A-H2B heterodimers. Interacts with the inner kinetochore. Interacts with the central kinetochore protein CTF19. Interacts with YTA7. Ubiquitinated. Is degraded through ubiquitin-mediated proteolysis when not protected by its association to the kinetochore.

It localises to the nucleus. The protein localises to the chromosome. It is found in the centromere. Functionally, histone H3-like nucleosomal protein that is specifically found in centromeric nucleosomes. Replaces conventional H3 in the nucleosome core of centromeric chromatin that serves as an assembly site for the inner kinetochore. Required for recruitment and assembly of kinetochore proteins, mitotic progression and chromosome segregation. May serve as an epigenetic mark that propagates centromere identity through replication and cell division. Required for functional chromatin architecture at the yeast 2-micron circle partitioning locus and promotes equal plasmid segregation. The sequence is that of Histone H3-like centromeric protein CSE4 (CSE4) from Saccharomyces cerevisiae (strain ATCC 204508 / S288c) (Baker's yeast).